Here is a 226-residue protein sequence, read N- to C-terminus: UPF0173 metal-dependent hydrolase Msed_2125 (226 aa).

Belongs to the UPF0173 family.

This Metallosphaera sedula (strain ATCC 51363 / DSM 5348 / JCM 9185 / NBRC 15509 / TH2) protein is UPF0173 metal-dependent hydrolase Msed_2125.